The chain runs to 495 residues: Probable aspartic-type endopeptidase OPSB (495 aa).

Positions 1 to 19 (MRGDSFIWSLATAIPLLST) are cleaved as a signal peptide. The Peptidase A1 domain occupies 73 to 408 (YFCNLTLGTP…DLDNNEISIA (336 aa)). N-linked (GlcNAc...) asparagine glycosylation occurs at asparagine 76. Residue aspartate 91 is part of the active site. N-linked (GlcNAc...) asparagine glycosylation occurs at asparagine 136. Aspartate 290 is an active-site residue. A glycan (N-linked (GlcNAc...) asparagine) is linked at asparagine 413. The interval 448-470 (TGLPGVETGVPGSRPPSSKAAGQ) is disordered. Alanine 467 carries GPI-anchor amidated alanine lipidation. The propeptide at 468–495 (AGQAKRPDFVLGVAAVGLAGAGMLFAAM) is removed in mature form.

This sequence belongs to the peptidase A1 family.

It is found in the cell membrane. Probable GPI-anchored aspartic-type endopeptidase which contributes to virulence. The chain is Probable aspartic-type endopeptidase OPSB (OPSB) from Trichophyton verrucosum (strain HKI 0517).